The chain runs to 360 residues: uncharacterized protein (360 aa).

Transmembrane regions (helical) follow at residues 12–32, 52–72, 96–116, 278–298, 306–326, and 336–356; these read ILPL…ITQI, VVLV…VIAV, IQLA…AYYI, IIWP…FLRY, FMPV…HFIL, and FIFA…YLLV.

The protein localises to the cell membrane. This is an uncharacterized protein from Rickettsia prowazekii (strain Madrid E).